Reading from the N-terminus, the 83-residue chain is MASPIPVGVTKEQAFSMAQTEMEYRVELFNKLAQTCFNKCVDKRYKEAELNMGENSCIDRCVSKYWQVNGMVGQLLSAGKPPV.

Position 2 is an N-acetylalanine (Ala-2). Residues 36–61 (CFNKCVDKRYKEAELNMGENSCIDRC) carry the Twin CX3C motif motif. Cystine bridges form between Cys-36/Cys-61 and Cys-40/Cys-57.

This sequence belongs to the small Tim family. Heterohexamer; composed of 3 copies of TIM9 and 3 copies of TIM10, named soluble 70 kDa complex. The complex associates with the TIM22 component of the TIM22 complex. Interacts with multi-pass transmembrane proteins in transit. Expressed in roots, flowers, young cotyledons and leaves.

Its subcellular location is the mitochondrion intermembrane space. Functionally, mitochondrial intermembrane chaperone that participates in the import and insertion of multi-pass transmembrane proteins into the mitochondrial inner membrane. May also be required for the transfer of beta-barrel precursors from the TOM complex to the sorting and assembly machinery (SAM complex) of the outer membrane. Acts as a chaperone-like protein that protects the hydrophobic precursors from aggregation and guide them through the mitochondrial intermembrane space. The polypeptide is Mitochondrial import inner membrane translocase subunit TIM10 (TIM10) (Arabidopsis thaliana (Mouse-ear cress)).